A 223-amino-acid polypeptide reads, in one-letter code: Killer cell lectin-like receptor subfamily B member 1B allele A (223 aa).

The Cytoplasmic segment spans residues 1-45; sequence MDTAVVYADLHLARTGEPKREPPPSLSPDTCQCPRWHRLALKLGC. The short motif at 5–10 is the ITIM motif element; it reads VVYADL. Positions 31–34 match the LCK-binding motif motif; it reads CQCP. The helical; Signal-anchor for type II membrane protein transmembrane segment at 46 to 66 threads the bilayer; sequence ACLILLVLSVIGLGVLVLTLL. The Extracellular portion of the chain corresponds to 67–223; it reads QKPLIQNSPA…LKRESTCNDS (157 aa). A C-type lectin domain is found at 101 to 211; the sequence is HQDKCFHVSQ…CDSDNIWICQ (111 aa). 2 disulfides stabilise this stretch: Cys-122/Cys-210 and Cys-189/Cys-202.

Homodimer; disulfide-linked. Interacts with tyrosine kinase LCK. Binds PTPN6/SHP-1 in a phosphorylation-dependent manner. As to expression, expressed in a subset of natural killer cells.

The protein localises to the membrane. In terms of biological role, receptor for CLEC2D/OCIL. Ligand-binding contributes to inhibition of cytotoxic natural killer (NK) cells. May mediate MHC class I-independent 'missing-self' recognition of allografts, tumor cells and virus-infected cells. In Rattus norvegicus (Rat), this protein is Killer cell lectin-like receptor subfamily B member 1B allele A.